The chain runs to 133 residues: Holo-[acyl-carrier-protein] synthase (133 aa).

2 residues coordinate Mg(2+): D8 and E57.

Belongs to the P-Pant transferase superfamily. AcpS family. The cofactor is Mg(2+).

It localises to the cytoplasm. It catalyses the reaction apo-[ACP] + CoA = holo-[ACP] + adenosine 3',5'-bisphosphate + H(+). Transfers the 4'-phosphopantetheine moiety from coenzyme A to a Ser of acyl-carrier-protein. The protein is Holo-[acyl-carrier-protein] synthase of Bartonella tribocorum (strain CIP 105476 / IBS 506).